The chain runs to 382 residues: Histidinol-phosphate aminotransferase (382 aa).

Lys215 bears the N6-(pyridoxal phosphate)lysine mark. The disordered stretch occupies residues 360–382 (NSNNIDNQSKTHSQTSSIRKGTI).

This sequence belongs to the class-II pyridoxal-phosphate-dependent aminotransferase family. Histidinol-phosphate aminotransferase subfamily. In terms of assembly, homodimer. Requires pyridoxal 5'-phosphate as cofactor.

It catalyses the reaction L-histidinol phosphate + 2-oxoglutarate = 3-(imidazol-4-yl)-2-oxopropyl phosphate + L-glutamate. It participates in amino-acid biosynthesis; L-histidine biosynthesis; L-histidine from 5-phospho-alpha-D-ribose 1-diphosphate: step 7/9. The protein is Histidinol-phosphate aminotransferase of Yersinia pseudotuberculosis serotype IB (strain PB1/+).